Here is a 143-residue protein sequence, read N- to C-terminus: Probable prefoldin subunit 2 (143 aa).

This sequence belongs to the prefoldin subunit beta family. In terms of assembly, heterohexamer of two PFD-alpha type and four PFD-beta type subunits.

Its function is as follows. Binds specifically to cytosolic chaperonin (c-CPN) and transfers target proteins to it. Binds to nascent polypeptide chain and promotes folding in an environment in which there are many competing pathways for nonnative proteins. This is Probable prefoldin subunit 2 from Drosophila melanogaster (Fruit fly).